We begin with the raw amino-acid sequence, 179 residues long: Large ribosomal subunit protein uL5 (179 aa).

This sequence belongs to the universal ribosomal protein uL5 family. Part of the 50S ribosomal subunit; part of the 5S rRNA/L5/L18/L25 subcomplex. Contacts the 5S rRNA and the P site tRNA. Forms a bridge to the 30S subunit in the 70S ribosome.

Its function is as follows. This is one of the proteins that bind and probably mediate the attachment of the 5S RNA into the large ribosomal subunit, where it forms part of the central protuberance. In the 70S ribosome it contacts protein S13 of the 30S subunit (bridge B1b), connecting the 2 subunits; this bridge is implicated in subunit movement. Contacts the P site tRNA; the 5S rRNA and some of its associated proteins might help stabilize positioning of ribosome-bound tRNAs. The polypeptide is Large ribosomal subunit protein uL5 (Tolumonas auensis (strain DSM 9187 / NBRC 110442 / TA 4)).